The primary structure comprises 201 residues: Thymidylate kinase (201 aa).

7-14 (GIDGSGKS) serves as a coordination point for ATP.

Belongs to the thymidylate kinase family.

It catalyses the reaction dTMP + ATP = dTDP + ADP. In terms of biological role, phosphorylation of dTMP to form dTDP in both de novo and salvage pathways of dTTP synthesis. This chain is Thymidylate kinase, found in Thermosipho africanus (strain TCF52B).